We begin with the raw amino-acid sequence, 813 residues long: Molybdenum cofactor sulfurase (813 aa).

K228 carries the N6-(pyridoxal phosphate)lysine modification. C391 is an active-site residue. The tract at residues 625 to 670 is disordered; it reads PSLRHAKAHMQKHQGPKRSAAIEKSSAHSFHDPPTPPDSDSENRKR. Residues 628–640 show a composition bias toward basic residues; sequence RHAKAHMQKHQGP. Positions 648–812 constitute an MOSC domain; it reads KSSAHSFHDP…IKVGDKVSIG (165 aa).

It belongs to the class-V pyridoxal-phosphate-dependent aminotransferase family. MOCOS subfamily. It depends on pyridoxal 5'-phosphate as a cofactor.

The catalysed reaction is Mo-molybdopterin + L-cysteine + AH2 = thio-Mo-molybdopterin + L-alanine + A + H2O. Functionally, sulfurates the molybdenum cofactor. Sulfation of molybdenum is essential for xanthine dehydrogenase (XDH) and aldehyde oxidase (ADO) enzymes in which molybdenum cofactor is liganded by 1 oxygen and 1 sulfur atom in active form. The chain is Molybdenum cofactor sulfurase from Botryotinia fuckeliana (strain B05.10) (Noble rot fungus).